The sequence spans 243 residues: MSLRGQVQIARSVFLLRIYILIWVQCLILMSVCAFCWLVLPHRLEQLFSSVRLTLSCLMISIVCLGLLRWAEPNFPKNVWILLTYTLLTSVAVTASGFHFSHRSVIYAMVATVTLFCFLTLATYLFARDVELQRSLLTGASTLILLLFAVFSLFPEAVSEILVMIAGLAVIVTSVVCDTQDILHDIEYESYIPGALCLYMDLMYLFVSVLYFMPSEPGSAHTAQTTVAATVAATAAASPQFVS.

7 helical membrane-spanning segments follow: residues 20–40 (ILIW…WLVL), 47–67 (LFSS…CLGL), 80–100 (WILL…GFHF), 106–126 (IYAM…TYLF), 143–163 (LILL…EILV), 164–184 (MIAG…DILH), and 192–212 (IPGA…VLYF).

Belongs to the cytomegalovirus US12 family.

The protein resides in the host membrane. In Human cytomegalovirus (strain Merlin) (HHV-5), this protein is Membrane protein US21 (US21).